A 664-amino-acid chain; its full sequence is Glycine--tRNA ligase beta subunit (664 aa).

This sequence belongs to the class-II aminoacyl-tRNA synthetase family. In terms of assembly, tetramer of two alpha and two beta subunits.

It is found in the cytoplasm. It carries out the reaction tRNA(Gly) + glycine + ATP = glycyl-tRNA(Gly) + AMP + diphosphate. The chain is Glycine--tRNA ligase beta subunit from Rickettsia africae (strain ESF-5).